A 175-amino-acid polypeptide reads, in one-letter code: uncharacterized protein (175 aa).

The HTH marR-type domain occupies 10 to 157; that stretch reads LFELYAELIH…AERLFRDLVT (148 aa). The segment at residues 68 to 91 is a DNA-binding region (H-T-H motif); the sequence is VTSIAEKMNTTKATVSRISTKLLG.

The protein localises to the cytoplasm. This is an uncharacterized protein from Bacillus subtilis (strain 168).